Reading from the N-terminus, the 252-residue chain is Ribosomal RNA small subunit methyltransferase J (252 aa).

S-adenosyl-L-methionine-binding positions include 101-102 (RD), 117-118 (ER), 153-154 (SS), and aspartate 171.

The protein belongs to the methyltransferase superfamily. RsmJ family.

It is found in the cytoplasm. It carries out the reaction guanosine(1516) in 16S rRNA + S-adenosyl-L-methionine = N(2)-methylguanosine(1516) in 16S rRNA + S-adenosyl-L-homocysteine + H(+). Specifically methylates the guanosine in position 1516 of 16S rRNA. This is Ribosomal RNA small subunit methyltransferase J from Salmonella dublin (strain CT_02021853).